A 424-amino-acid chain; its full sequence is Glutamate-1-semialdehyde 2,1-aminomutase (424 aa).

Residue lysine 264 is modified to N6-(pyridoxal phosphate)lysine.

Belongs to the class-III pyridoxal-phosphate-dependent aminotransferase family. HemL subfamily. As to quaternary structure, homodimer. Pyridoxal 5'-phosphate serves as cofactor.

It localises to the cytoplasm. It catalyses the reaction (S)-4-amino-5-oxopentanoate = 5-aminolevulinate. The protein operates within porphyrin-containing compound metabolism; protoporphyrin-IX biosynthesis; 5-aminolevulinate from L-glutamyl-tRNA(Glu): step 2/2. The sequence is that of Glutamate-1-semialdehyde 2,1-aminomutase (hemL) from Aquifex aeolicus (strain VF5).